Here is a 345-residue protein sequence, read N- to C-terminus: MTQITLLTPDDWHLHFRDGDMLQETVPATARLFQRAIVMPNLLPPVTDAKMVTEYRERILAARPAGSTFEPLMTIFLTNNTTEQDIIDAKAAGVVAAKLYPAGATTNSDAAVKALDALFPVFEAMAKHGMLLLVHGEVTESHIDIFDREAMFIERYLARIVAAFPTLKVVFEHITTKDAADFVMSAADNVAATITPQHLLLNRNDLLVGGVRPHNFCLPVLKRSTHQEALRAAVATGSSKFFLGTDSAPHEKHRKESACGCAGCYSAWSALELYAQVFDDLGALDKLEGFASKHGPDFYGLPRNTSTVTLVKEKWTVPSEIILPNGNPIVPFFAGEEINWKVKTA.

Zn(2+)-binding residues include His13 and His15. Residues 15–17 (HFR) and Asn41 contribute to the substrate site. Residues Lys98, His135, and His173 each contribute to the Zn(2+) site. Lys98 bears the N6-carboxylysine mark. Residue His135 participates in substrate binding. Leu218 provides a ligand contact to substrate. Asp246 serves as a coordination point for Zn(2+). The active site involves Asp246. Residues His250 and Ala262 each coordinate substrate.

Belongs to the metallo-dependent hydrolases superfamily. DHOase family. Class II DHOase subfamily. Homodimer. It depends on Zn(2+) as a cofactor.

It catalyses the reaction (S)-dihydroorotate + H2O = N-carbamoyl-L-aspartate + H(+). The protein operates within pyrimidine metabolism; UMP biosynthesis via de novo pathway; (S)-dihydroorotate from bicarbonate: step 3/3. In terms of biological role, catalyzes the reversible cyclization of carbamoyl aspartate to dihydroorotate. The chain is Dihydroorotase from Shewanella pealeana (strain ATCC 700345 / ANG-SQ1).